We begin with the raw amino-acid sequence, 29 residues long: Lambda-theraphotoxin-Ec2c (29 aa).

Cystine bridges form between C2-C16, C9-C21, and C15-C25.

The protein belongs to the neurotoxin 30 (phrixotoxin) family. Expressed by the venom gland.

It localises to the secreted. Functionally, both insecticidal and vertebrate neurotoxin that potently blocks insect calcium-activated potassium (BKCa) channels (Slo-type) in cockroach dorsal unpaired median (DUM) neurons (IC(50)=24.6 nM). This occurs in the absence of any shifts in the voltage dependence of activation. May interact with the turret and/or loop region of the external entrance to the channel and does not project deeply into the pore of the channel. Also shows toxicity to mice by introcerebroventicular injection. The sequence is that of Lambda-theraphotoxin-Ec2c from Eucratoscelus constrictus (African red-rump baboon spider).